Here is a 572-residue protein sequence, read N- to C-terminus: Probable pyruvate decarboxylase C186.09 (572 aa).

The substrate site is built by D38 and H125. The segment at 400-482 (DSWFGGMRIT…FLINNRGYTI (83 aa)) is thiamine pyrophosphate binding. The Mg(2+) site is built by D450, N477, and G479. E483 provides a ligand contact to substrate.

It belongs to the TPP enzyme family. In terms of assembly, homotetramer. It depends on a metal cation as a cofactor. The cofactor is thiamine diphosphate.

The catalysed reaction is a 2-oxocarboxylate + H(+) = an aldehyde + CO2. The polypeptide is Probable pyruvate decarboxylase C186.09 (Schizosaccharomyces pombe (strain 972 / ATCC 24843) (Fission yeast)).